The following is a 38-amino-acid chain: Photosystem II reaction center protein L (38 aa).

Residues 17–37 (SLYWGLLLIFVLAVLFSNYFF) form a helical membrane-spanning segment.

Belongs to the PsbL family. In terms of assembly, PSII is composed of 1 copy each of membrane proteins PsbA, PsbB, PsbC, PsbD, PsbE, PsbF, PsbH, PsbI, PsbJ, PsbK, PsbL, PsbM, PsbT, PsbX, PsbY, PsbZ, Psb30/Ycf12, at least 3 peripheral proteins of the oxygen-evolving complex and a large number of cofactors. It forms dimeric complexes.

It localises to the plastid. The protein resides in the chloroplast thylakoid membrane. Functionally, one of the components of the core complex of photosystem II (PSII). PSII is a light-driven water:plastoquinone oxidoreductase that uses light energy to abstract electrons from H(2)O, generating O(2) and a proton gradient subsequently used for ATP formation. It consists of a core antenna complex that captures photons, and an electron transfer chain that converts photonic excitation into a charge separation. This subunit is found at the monomer-monomer interface and is required for correct PSII assembly and/or dimerization. The protein is Photosystem II reaction center protein L of Psilotum nudum (Whisk fern).